A 146-amino-acid chain; its full sequence is Hemoglobin subunit beta (146 aa).

At valine 1 the chain carries N-acetylvaline. The 145-residue stretch at 2-146 (HLTDAEKALV…VATALAHKYH (145 aa)) folds into the Globin domain. The residue at position 12 (threonine 12) is a Phosphothreonine. Serine 44 carries the post-translational modification Phosphoserine. N6-acetyllysine is present on lysine 59. Histidine 63 is a binding site for heme b. Residue lysine 82 is modified to N6-acetyllysine. Histidine 92 is a heme b binding site. Cysteine 93 carries the post-translational modification S-nitrosocysteine. Residue lysine 144 is modified to N6-acetyllysine.

It belongs to the globin family. In terms of assembly, heterotetramer of two alpha chains and two beta chains. Red blood cells.

Involved in oxygen transport from the lung to the various peripheral tissues. This chain is Hemoglobin subunit beta, found in Peromyscus californicus (California mouse).